The primary structure comprises 1117 residues: DNA polymerase (1117 aa).

The tract at residues 591–621 (ESSPVASFEEDSEQTSDSSLGEVSSQGSSDG) is disordered. Residues 606–618 (SDSSLGEVSSQGS) show a composition bias toward low complexity.

Belongs to the DNA polymerase type-B family.

The protein resides in the host nucleus. The catalysed reaction is DNA(n) + a 2'-deoxyribonucleoside 5'-triphosphate = DNA(n+1) + diphosphate. This Cavia porcellus (Guinea pig) protein is DNA polymerase.